We begin with the raw amino-acid sequence, 550 residues long: Copine-F (550 aa).

C2 domains follow at residues 1–115 and 123–246; these read MAET…RLIG and ITGK…PIIN. One can recognise a VWFA domain in the interval 296-521; sequence DLMVAIDCTE…DFQNEILRKL (226 aa).

Belongs to the copine family.

The protein is Copine-F (cpnF) of Dictyostelium discoideum (Social amoeba).